The sequence spans 209 residues: Bilin biosynthesis protein RpcF (209 aa).

Belongs to the CpcE/RpcE/PecE family.

In terms of biological role, an enzyme involved in the biosynthesis of bilin. Might be involved in the specific attachment of phycoerythrobilin (PEB) to the R-phycocyanin II alpha chain. This chain is Bilin biosynthesis protein RpcF (rpcF), found in Synechococcus sp. (strain WH8020).